Here is a 517-residue protein sequence, read N- to C-terminus: Glutamate--cysteine ligase (517 aa).

Belongs to the glutamate--cysteine ligase type 1 family. Type 1 subfamily.

The enzyme catalyses L-cysteine + L-glutamate + ATP = gamma-L-glutamyl-L-cysteine + ADP + phosphate + H(+). Its pathway is sulfur metabolism; glutathione biosynthesis; glutathione from L-cysteine and L-glutamate: step 1/2. The chain is Glutamate--cysteine ligase from Pectobacterium atrosepticum (strain SCRI 1043 / ATCC BAA-672) (Erwinia carotovora subsp. atroseptica).